We begin with the raw amino-acid sequence, 130 residues long: Small ribosomal subunit protein uS9 (130 aa).

It belongs to the universal ribosomal protein uS9 family.

The sequence is that of Small ribosomal subunit protein uS9 from Anoxybacillus flavithermus (strain DSM 21510 / WK1).